Here is a 347-residue protein sequence, read N- to C-terminus: Calcium homeostasis modulator protein 3 (347 aa).

At 1–20 the chain is on the cytoplasmic side; it reads MDRFRMLFQHLQSSSESVMN. The segment at 9–36 is central pore; that stretch reads QHLQSSSESVMNGICLLLAAVTVKIYSS. A helical transmembrane segment spans residues 21-36; that stretch reads GICLLLAAVTVKIYSS. Residues 37–48 are Extracellular-facing; the sequence is LDFNCPCLERYN. 2 disulfide bridges follow: Cys41–Cys126 and Cys43–Cys157. The helical transmembrane segment at 49–71 threads the bilayer; the sequence is ALYGLGLLLTPPLALFLCGLLVN. Residues 72 to 98 lie on the Cytoplasmic side of the membrane; that stretch reads RQSVLMVEEWRRPAGHRRKDLGIIRYM. The S-palmitoyl cysteine moiety is linked to residue Cys99. The helical transmembrane segment at 99–124 threads the bilayer; it reads CSSVLQRALAAPLVWILLALLDGKCF. The Extracellular portion of the chain corresponds to 125–176; it reads VCAFSNSVDPEKFLDFANMTPRQVQLFLAKVPCKEDELVKNSPARKAVSRYL. Asn142 carries N-linked (GlcNAc...) asparagine glycosylation. The helical transmembrane segment at 177-202 threads the bilayer; it reads RCLSQAIGWSITLLVIVVAFLARCLR. S-palmitoyl cysteine attachment occurs at residues Cys200 and Cys204. The Cytoplasmic portion of the chain corresponds to 203-347; it reads PCFDQTVFLQ…GTKLCHQLNV (145 aa). Residues 265–290 form a disordered region; it reads GGIPESQESSEPPELREDRDSGNGKA. Positions 277–286 are enriched in basic and acidic residues; the sequence is PELREDRDSG.

The protein belongs to the CALHM family. In terms of assembly, associates with CALHM1 as a pore-forming subunit in a hetero-hexameric channel complex. Post-translationally, N-glycosylated. Palmitoylated by ZDHHC3 and ZDHHC15. Palmitoylation positively regulates CALHM1:CALHM3 channel conductance. Expressed in taste bud cells.

The protein resides in the basolateral cell membrane. It catalyses the reaction ATP(in) = ATP(out). The catalysed reaction is Ca(2+)(in) = Ca(2+)(out). It carries out the reaction Na(+)(in) = Na(+)(out). The enzyme catalyses K(+)(in) = K(+)(out). It catalyses the reaction chloride(in) = chloride(out). Its function is as follows. Pore-forming subunit of gustatory voltage-gated ion channels required for sensory perception of sweet, bitter and umami tastes. With CALHM1 forms a fast-activating voltage-gated ATP-release channel in type II taste bud cells, ATP acting as a neurotransmitter to activate afferent neural gustatory pathways. Acts both as a voltage-gated and calcium-activated ion channel: mediates neuronal excitability in response to membrane depolarization and low extracellular Ca(2+) concentration. Has poor ion selectivity and forms a wide pore (around 14 Angstroms) that mediates permeation of small ions including Ca(2+), Na(+), K(+) and Cl(-), as well as larger ions such as ATP(4-). This is Calcium homeostasis modulator protein 3 from Mus musculus (Mouse).